The sequence spans 394 residues: Acetate kinase (394 aa).

Mg(2+) is bound at residue N7. K14 contacts ATP. R88 contacts substrate. Catalysis depends on D145, which acts as the Proton donor/acceptor. Residues 205 to 209 (HLGNG), 279 to 281 (DFR), and 327 to 331 (GIGEN) contribute to the ATP site. E379 is a binding site for Mg(2+).

It belongs to the acetokinase family. Homodimer. Mg(2+) serves as cofactor. Mn(2+) is required as a cofactor.

It is found in the cytoplasm. The enzyme catalyses acetate + ATP = acetyl phosphate + ADP. Its pathway is metabolic intermediate biosynthesis; acetyl-CoA biosynthesis; acetyl-CoA from acetate: step 1/2. In terms of biological role, catalyzes the formation of acetyl phosphate from acetate and ATP. Can also catalyze the reverse reaction. The protein is Acetate kinase of Campylobacter lari (strain RM2100 / D67 / ATCC BAA-1060).